We begin with the raw amino-acid sequence, 206 residues long: Large ribosomal subunit protein uL4 (206 aa).

The disordered stretch occupies residues 62-85 (KPWRQKGTGRARQGSTRSPQFRGG).

The protein belongs to the universal ribosomal protein uL4 family. As to quaternary structure, part of the 50S ribosomal subunit.

Functionally, one of the primary rRNA binding proteins, this protein initially binds near the 5'-end of the 23S rRNA. It is important during the early stages of 50S assembly. It makes multiple contacts with different domains of the 23S rRNA in the assembled 50S subunit and ribosome. Its function is as follows. Forms part of the polypeptide exit tunnel. This chain is Large ribosomal subunit protein uL4, found in Rhodospirillum centenum (strain ATCC 51521 / SW).